A 243-amino-acid polypeptide reads, in one-letter code: Venom nerve growth factor 5 (243 aa).

Positions 1–18 (MSMLCYTLIIAFLIGIWA) are cleaved as a signal peptide. Residues 19–125 (APKSEDNVPL…TLNRNIRTKR (107 aa)) constitute a propeptide that is removed on maturation. The span at 47–66 (GLKTSRNTDQRHPAPKKAED) shows a compositional bias: basic and acidic residues. The interval 47–67 (GLKTSRNTDQRHPAPKKAEDQ) is disordered. Intrachain disulfides connect Cys-139-Cys-204, Cys-182-Cys-232, and Cys-192-Cys-234. A glycan (N-linked (GlcNAc...) asparagine) is linked at Asn-148.

It belongs to the NGF-beta family. In terms of assembly, homodimer; non-covalently linked. As to expression, expressed by the venom gland.

Its subcellular location is the secreted. Functionally, nerve growth factor is important for the development and maintenance of the sympathetic and sensory nervous systems. It stimulates division and differentiation of sympathetic and embryonic sensory neurons as well as basal forebrain cholinergic neurons in the brain. Its relevance in the snake venom is not clear. However, it has been shown to inhibit metalloproteinase-dependent proteolysis of platelet glycoprotein Ib alpha, suggesting a metalloproteinase inhibition to prevent metalloprotease autodigestion and/or protection against prey proteases. Binds a lipid between the two protein chains in the homodimer. The lipid-bound form promotes histamine relase from mouse mast cells, contrary to the lipid-free form. This chain is Venom nerve growth factor 5, found in Tropidechis carinatus (Australian rough-scaled snake).